A 233-amino-acid chain; its full sequence is Phosphoenolpyruvate guanylyltransferase 1 (233 aa).

Positions 154, 171, and 174 each coordinate phosphoenolpyruvate.

Belongs to the CofC family.

It carries out the reaction phosphoenolpyruvate + GTP + H(+) = enolpyruvoyl-2-diphospho-5'-guanosine + diphosphate. It participates in cofactor biosynthesis; coenzyme F420 biosynthesis. Guanylyltransferase that catalyzes the activation of phosphoenolpyruvate (PEP) as enolpyruvoyl-2-diphospho-5'-guanosine, via the condensation of PEP with GTP. It is involved in the biosynthesis of coenzyme F420, a hydride carrier cofactor. The polypeptide is Phosphoenolpyruvate guanylyltransferase 1 (Rhodococcus jostii (strain RHA1)).